A 137-amino-acid polypeptide reads, in one-letter code: TM2 domain-containing protein DDB_G0287015 (137 aa).

In terms of domain architecture, TM2 spans 9–57; the sequence is QASLVVAYLLLIFLGFFGVHRFYVGRTISGVVYLLTGGIFGIGYIVDFF. Transmembrane regions (helical) follow at residues 12-32 and 39-59; these read LVVA…RFYV and VVYL…FFLL. Residues 106-137 are disordered; the sequence is IQPQQQQYYQQPYQQQQYQPQPYQPNSPQYQP.

Belongs to the TM2 family.

It localises to the membrane. This chain is TM2 domain-containing protein DDB_G0287015, found in Dictyostelium discoideum (Social amoeba).